Consider the following 292-residue polypeptide: Cyclin-dependent kinase 5 (292 aa).

A Protein kinase domain is found at 4–286; the sequence is YEKLEKIGEG…AEEALQHPYF (283 aa). ATP-binding positions include 10–18 and Lys-33; that span reads IGEGTYGTV. Tyr-15 is modified (phosphotyrosine; by ABL1, EPHA4 and FYN). Thr-17 is subject to Phosphothreonine. N6-acetyllysine is present on Lys-56. Residue Ser-72 is modified to Phosphoserine. Asp-126 serves as the catalytic Proton acceptor. Ser-159 is modified (phosphoserine).

This sequence belongs to the protein kinase superfamily. CMGC Ser/Thr protein kinase family. CDC2/CDKX subfamily. Heterodimer composed of a catalytic subunit CDK5 and a regulatory subunit CDK5R1 (p25) and macromolecular complex composed of at least CDK5, CDK5R1 (p35) and CDK5RAP1 or CDK5RAP2 or CDK5RAP3. Only the heterodimer shows kinase activity. Under neurotoxic stress and neuronal injury conditions, p35 is cleaved by calpain to generate p25 that hyperactivates CDK5, that becomes functionally disabled and often toxic. Found in a trimolecular complex with CABLES1 and ABL1. Interacts with CABLES1 and CABLES2. Interacts with AATK and GSTP1. Binds to HDAC1 when in complex with p25. Interaction with myristoylation p35 promotes CDK5 association with membranes. Both isoforms 1 and 2 interacts with beta-catenin/CTNNB1. Interacts with delta-catenin/CTNND2 and APEX1. Interacts with P53/TP53 in neurons. Interacts with EPHA4; may mediate the activation of NGEF by EPHA4. Interacts with PTK2/FAK1. The complex p35/CDK5 interacts with CLOCK. Post-translationally, phosphorylation on Tyr-15 by ABL1 and FYN, and on Ser-159 by casein kinase 1 promotes kinase activity. By contrast, phosphorylation at Thr-14 inhibits activity. Phosphorylation at Ser-159 is essential for maximal catalytic activity.

The protein resides in the nucleus. The protein localises to the cytoplasm. Its subcellular location is the cell membrane. It localises to the perikaryon. It is found in the cell projection. The protein resides in the lamellipodium. The protein localises to the growth cone. Its subcellular location is the postsynaptic density. It localises to the synapse. It catalyses the reaction L-seryl-[protein] + ATP = O-phospho-L-seryl-[protein] + ADP + H(+). The enzyme catalyses L-threonyl-[protein] + ATP = O-phospho-L-threonyl-[protein] + ADP + H(+). With respect to regulation, inhibited by 2-(1-ethyl-2-hydroxyethylamino)-6-benzylamino-9-isopropylpurine (roscovitine), 1-isopropyl-4-aminobenzyl-6-ether-linked benzimidazoles, resveratrol, AT-7519 and olomoucine. Activated by CDK5R1 (p35) and CDK5R2 (p39) during the development of the nervous system; degradation of CDK5R1 (p35) and CDK5R2 (p39) by proteasome result in down regulation of kinase activity, during this process, CDK5 phosphorylates p35 and induces its ubiquitination and subsequent degradation. Kinase activity is mainly determined by the amount of p35 available and subcellular location; reversible association to plasma membrane inhibits activity. Long-term inactivation as well as CDK5R1 (p25)-mediated hyperactivation of CDK5 triggers cell death. The pro-death activity of hyperactivated CDK5 is suppressed by membrane association of CDK5, via myristoylation of p35. Brain-derived neurotrophic factor, glial-derived neurotrophic factor, nerve growth factor (NGF), retinoic acid, laminin and neuregulin promote activity. Neurotoxicity enhances nuclear activity, thus leading to MEF2 phosphorylation and inhibition prior to apoptosis of cortical neurons. Repression by GSTP1 via p25/p35 translocation prevents neurodegeneration. In terms of biological role, proline-directed serine/threonine-protein kinase essential for neuronal cell cycle arrest and differentiation and may be involved in apoptotic cell death in neuronal diseases by triggering abortive cell cycle re-entry. Interacts with D1 and D3-type G1 cyclins. Phosphorylates SRC, NOS3, VIM/vimentin, p35/CDK5R1, MEF2A, SIPA1L1, SH3GLB1, PXN, PAK1, MCAM/MUC18, SEPT5, SYN1, DNM1, AMPH, SYNJ1, CDK16, RAC1, RHOA, CDC42, TONEBP/NFAT5, MAPT/TAU, MAP1B, histone H1, p53/TP53, HDAC1, APEX1, PTK2/FAK1, huntingtin/HTT, ATM, MAP2, NEFH and NEFM. Regulates several neuronal development and physiological processes including neuronal survival, migration and differentiation, axonal and neurite growth, synaptogenesis, oligodendrocyte differentiation, synaptic plasticity and neurotransmission, by phosphorylating key proteins. Negatively regulates the CACNA1B/CAV2.2 -mediated Ca(2+) release probability at hippocampal neuronal soma and synaptic terminals. Activated by interaction with CDK5R1 (p35) and CDK5R2 (p39), especially in postmitotic neurons, and promotes CDK5R1 (p35) expression in an autostimulation loop. Phosphorylates many downstream substrates such as Rho and Ras family small GTPases (e.g. PAK1, RAC1, RHOA, CDC42) or microtubule-binding proteins (e.g. MAPT/TAU, MAP2, MAP1B), and modulates actin dynamics to regulate neurite growth and/or spine morphogenesis. Also phosphorylates exocytosis associated proteins such as MCAM/MUC18, SEPT5, SYN1, and CDK16/PCTAIRE1 as well as endocytosis associated proteins such as DNM1, AMPH and SYNJ1 at synaptic terminals. In the mature central nervous system (CNS), regulates neurotransmitter movements by phosphorylating substrates associated with neurotransmitter release and synapse plasticity; synaptic vesicle exocytosis, vesicles fusion with the presynaptic membrane, and endocytosis. Promotes cell survival by activating anti-apoptotic proteins BCL2 and STAT3, and negatively regulating of JNK3/MAPK10 activity. Phosphorylation of p53/TP53 in response to genotoxic and oxidative stresses enhances its stabilization by preventing ubiquitin ligase-mediated proteasomal degradation, and induces transactivation of p53/TP53 target genes, thus regulating apoptosis. Phosphorylation of p35/CDK5R1 enhances its stabilization by preventing calpain-mediated proteolysis producing p25/CDK5R1 and avoiding ubiquitin ligase-mediated proteasomal degradation. During aberrant cell-cycle activity and DNA damage, p25/CDK5 activity elicits cell-cycle activity and double-strand DNA breaks that precedes neuronal death by deregulating HDAC1. DNA damage triggered phosphorylation of huntingtin/HTT in nuclei of neurons protects neurons against polyglutamine expansion as well as DNA damage mediated toxicity. Phosphorylation of PXN reduces its interaction with PTK2/FAK1 in matrix-cell focal adhesions (MCFA) during oligodendrocytes (OLs) differentiation. Negative regulator of Wnt/beta-catenin signaling pathway. Activator of the GAIT (IFN-gamma-activated inhibitor of translation) pathway, which suppresses expression of a post-transcriptional regulon of proinflammatory genes in myeloid cells; phosphorylates the linker domain of glutamyl-prolyl tRNA synthetase (EPRS) in a IFN-gamma-dependent manner, the initial event in assembly of the GAIT complex. Phosphorylation of SH3GLB1 is required for autophagy induction in starved neurons. Phosphorylation of TONEBP/NFAT5 in response to osmotic stress mediates its rapid nuclear localization. MEF2 is inactivated by phosphorylation in nucleus in response to neurotoxin, thus leading to neuronal apoptosis. APEX1 AP-endodeoxyribonuclease is repressed by phosphorylation, resulting in accumulation of DNA damage and contributing to neuronal death. NOS3 phosphorylation down regulates NOS3-derived nitrite (NO) levels. SRC phosphorylation mediates its ubiquitin-dependent degradation and thus leads to cytoskeletal reorganization. May regulate endothelial cell migration and angiogenesis via the modulation of lamellipodia formation. Involved in dendritic spine morphogenesis by mediating the EFNA1-EPHA4 signaling. The complex p35/CDK5 participates in the regulation of the circadian clock by modulating the function of CLOCK protein: phosphorylates CLOCK at 'Thr-451' and 'Thr-461' and regulates the transcriptional activity of the CLOCK-BMAL1 heterodimer in association with altered stability and subcellular distribution. This is Cyclin-dependent kinase 5 from Bos taurus (Bovine).